Here is a 573-residue protein sequence, read N- to C-terminus: Putative 15-O-acetyltransferase SAT12 (573 aa).

The segment at 1–40 (MLDDDCSPTSSSEMSNASSREASITSRSSSTSGNNSLPED) is disordered. Positions 7-36 (SPTSSSEMSNASSREASITSRSSSTSGNNS) are enriched in low complexity.

This sequence belongs to the trichothecene O-acetyltransferase family.

Its pathway is mycotoxin biosynthesis. In terms of biological role, putative 15-O-acetyltransferase; part of the satratoxin SC2 cluster involved in the biosynthesis of satratoxins, trichothecene mycotoxins that are associated with human food poisonings. Satratoxins are suggested to be made by products of multiple gene clusters (SC1, SC2 and SC3) that encode 21 proteins in all, including polyketide synthases, acetyltransferases, and other enzymes expected to modify the trichothecene skeleton. SC1 encodes 10 proteins, SAT1 to SAT10. The largest are SAT8, which encodes a putative polyketide synthase (PKS) with a conventional non-reducing architecture, and SAT10, a putative protein containing four ankyrin repeats and thus may be involved in protein scaffolding. The putative short-chain reductase SAT3 may assist the PKS in some capacity. SAT6 contains a secretory lipase domain and acts probably as a trichothecene esterase. SAT5 encodes a putative acetyltransferase, and so, with SAT6, may affect endogenous protection from toxicity. The probable transcription factor SAT9 may regulate the expression of the SC1 cluster. SC2 encodes proteins SAT11 to SAT16, the largest of which encodes the putative reducing PKS SAT13. SAT11 is a cytochrome P450 monooxygenase, while SAT14 and SAT16 are probable acetyltransferases. The SC2 cluster may be regulated by the transcription factor SAT15. SC3 is a small cluster that encodes 5 proteins, SAT17 to SAT21. SAT21 is a putative MFS-type transporter which may have a role in exporting secondary metabolites. The four other proteins putatively encoded in SC3 include the taurine hydroxylase-like protein SAT17, the O-methyltransferase SAT18, the acetyltransferase SAT19, and the Cys6-type zinc finger SAT20, the latter being probably involved in regulation of SC3 expression. This Stachybotrys chartarum (strain CBS 109288 / IBT 7711) (Toxic black mold) protein is Putative 15-O-acetyltransferase SAT12.